The primary structure comprises 297 residues: 4-hydroxy-tetrahydrodipicolinate synthase (297 aa).

A pyruvate-binding site is contributed by T46. Y134 acts as the Proton donor/acceptor in catalysis. K162 serves as the catalytic Schiff-base intermediate with substrate. I209 is a pyruvate binding site.

Belongs to the DapA family. As to quaternary structure, homotetramer; dimer of dimers.

It is found in the cytoplasm. It catalyses the reaction L-aspartate 4-semialdehyde + pyruvate = (2S,4S)-4-hydroxy-2,3,4,5-tetrahydrodipicolinate + H2O + H(+). It participates in amino-acid biosynthesis; L-lysine biosynthesis via DAP pathway; (S)-tetrahydrodipicolinate from L-aspartate: step 3/4. Its function is as follows. Catalyzes the condensation of (S)-aspartate-beta-semialdehyde [(S)-ASA] and pyruvate to 4-hydroxy-tetrahydrodipicolinate (HTPA). This chain is 4-hydroxy-tetrahydrodipicolinate synthase, found in Methanosphaera stadtmanae (strain ATCC 43021 / DSM 3091 / JCM 11832 / MCB-3).